The following is a 193-amino-acid chain: Sarcoplasmic calcium-binding protein, alpha chain (193 aa).

IgE-binding epitope stretches follow at residues 10 to 36 and 49 to 72; these read KYVV…LAVR and DAYA…ADFN. 3 consecutive EF-hand domains span residues 16 to 40, 57 to 92, and 101 to 136; these read MYDI…NTLI, IMRN…HCQG, and AFKV…RSAF. Ca(2+)-binding residues include Asp18, Asp20, Asn22, Asp29, Asp70, Asn72, Asp74, Glu76, Glu81, Asp114, Asn116, Asp118, Lys120, and Glu125. The segment at 130 to 147 is igE-binding epitope; the sequence is CITRSAFAEVKEIDDAYN.

SCPs from crayfish, lobster, and shrimp are polymorphic dimers; three isotypes (alpha-alpha, alpha-beta, and beta-beta) have been identified. In terms of tissue distribution, expressed in tail muscle (at protein level).

Like parvalbumins, SCPs seem to be more abundant in fast contracting muscles, but no functional relationship can be established from this distribution. This Penaeus vannamei (Whiteleg shrimp) protein is Sarcoplasmic calcium-binding protein, alpha chain.